We begin with the raw amino-acid sequence, 526 residues long: Probable feruloyl esterase B (526 aa).

Positions 1-18 (MARLSLLTLLALGSAALA) are cleaved as a signal peptide. 2 disulfide bridges follow: Cys-27-Cys-74 and Cys-62-Cys-113. N-linked (GlcNAc...) asparagine glycosylation is present at Asn-137. Intrachain disulfides connect Cys-186–Cys-441, Cys-255–Cys-272, Cys-281–Cys-291, and Cys-503–Cys-525. Catalysis depends on Ser-187, which acts as the Acyl-ester intermediate. An N-linked (GlcNAc...) asparagine glycan is attached at Asn-233. Ca(2+) contacts are provided by Asp-256, Asp-259, Ala-261, Asp-263, and Ile-265. An N-linked (GlcNAc...) asparagine glycan is attached at Asn-311. Residues Asp-400 and His-440 each act as charge relay system in the active site. Residue Asn-516 is glycosylated (N-linked (GlcNAc...) asparagine).

The protein belongs to the tannase family.

It localises to the secreted. The enzyme catalyses feruloyl-polysaccharide + H2O = ferulate + polysaccharide.. In terms of biological role, involved in degradation of plant cell walls. Hydrolyzes the feruloyl-arabinose ester bond in arabinoxylans as well as the feruloyl-galactose and feruloyl-arabinose ester bonds in pectin. This is Probable feruloyl esterase B (faeB) from Aspergillus clavatus (strain ATCC 1007 / CBS 513.65 / DSM 816 / NCTC 3887 / NRRL 1 / QM 1276 / 107).